The primary structure comprises 112 residues: UPF0342 protein SPP_1392 (112 aa).

The protein belongs to the UPF0342 family.

This chain is UPF0342 protein SPP_1392, found in Streptococcus pneumoniae (strain P1031).